The primary structure comprises 438 residues: Adenosylhomocysteinase (438 aa).

Positions 61, 137, and 162 each coordinate substrate. 163–165 (TTT) contributes to the NAD(+) binding site. Residues Lys-192 and Asp-196 each coordinate substrate. Residues Asn-197, 226-231 (GYGDVG), Glu-249, Asn-284, 305-307 (IGH), and Asn-352 each bind NAD(+).

This sequence belongs to the adenosylhomocysteinase family. NAD(+) is required as a cofactor.

Its subcellular location is the cytoplasm. The catalysed reaction is S-adenosyl-L-homocysteine + H2O = L-homocysteine + adenosine. The protein operates within amino-acid biosynthesis; L-homocysteine biosynthesis; L-homocysteine from S-adenosyl-L-homocysteine: step 1/1. Its function is as follows. May play a key role in the regulation of the intracellular concentration of adenosylhomocysteine. The chain is Adenosylhomocysteinase from Flavobacterium johnsoniae (strain ATCC 17061 / DSM 2064 / JCM 8514 / BCRC 14874 / CCUG 350202 / NBRC 14942 / NCIMB 11054 / UW101) (Cytophaga johnsonae).